A 180-amino-acid chain; its full sequence is Translation initiation factor IF-3 (180 aa).

This sequence belongs to the IF-3 family. As to quaternary structure, monomer.

The protein localises to the cytoplasm. In terms of biological role, IF-3 binds to the 30S ribosomal subunit and shifts the equilibrium between 70S ribosomes and their 50S and 30S subunits in favor of the free subunits, thus enhancing the availability of 30S subunits on which protein synthesis initiation begins. This is Translation initiation factor IF-3 from Caldanaerobacter subterraneus subsp. tengcongensis (strain DSM 15242 / JCM 11007 / NBRC 100824 / MB4) (Thermoanaerobacter tengcongensis).